The primary structure comprises 407 residues: Argininosuccinate synthase (407 aa).

ATP-binding positions include 10–18 (AYSGGLDTS) and Ala37. L-citrulline is bound by residues Tyr90 and Ser95. Residue Gly120 coordinates ATP. L-aspartate is bound by residues Thr122, Asn126, and Asp127. Residue Asn126 participates in L-citrulline binding. Residues Arg130, Ser181, Ser190, Glu266, and Tyr278 each contribute to the L-citrulline site.

Belongs to the argininosuccinate synthase family. Type 1 subfamily. Homotetramer.

It is found in the cytoplasm. The enzyme catalyses L-citrulline + L-aspartate + ATP = 2-(N(omega)-L-arginino)succinate + AMP + diphosphate + H(+). It functions in the pathway amino-acid biosynthesis; L-arginine biosynthesis; L-arginine from L-ornithine and carbamoyl phosphate: step 2/3. This Ruegeria sp. (strain TM1040) (Silicibacter sp.) protein is Argininosuccinate synthase.